The chain runs to 336 residues: Heme A synthase (336 aa).

8 helical membrane-spanning segments follow: residues 5–25 (LTRWLLTCCIMVVAMIIVGGI), 92–112 (GRATGLIYILPLIYFYFKGII), 117–137 (ILSYIIVLLLFCVQGFMGWYM), 153–173 (LAFHLIIAVIIYHLLFYKLVK), 191–211 (LIFSVAAIAMIYVQIFLGALV), 253–273 (FIHRLGAYSLSIIVIALIISL), 284–304 (VAFYLSIALLIQLSTGVITLL), and 307–327 (VPIIAASMHQFFAIVLLSVVI). Heme is bound at residue His-255. Heme is bound at residue His-315.

Belongs to the COX15/CtaA family. Type 2 subfamily. In terms of assembly, interacts with CtaB. It depends on heme b as a cofactor.

It is found in the cell membrane. It carries out the reaction Fe(II)-heme o + 2 A + H2O = Fe(II)-heme a + 2 AH2. The protein operates within porphyrin-containing compound metabolism; heme A biosynthesis; heme A from heme O: step 1/1. Its function is as follows. Catalyzes the conversion of heme O to heme A by two successive hydroxylations of the methyl group at C8. The first hydroxylation forms heme I, the second hydroxylation results in an unstable dihydroxymethyl group, which spontaneously dehydrates, resulting in the formyl group of heme A. This chain is Heme A synthase, found in Rickettsia bellii (strain RML369-C).